The following is a 331-amino-acid chain: Ketol-acid reductoisomerase (NADP(+)) (331 aa).

A KARI N-terminal Rossmann domain is found at 2–182 (ARMYYDTDAN…GGTRAGILET (181 aa)). Residues 25–28 (YGSQ), Ser51, Ser53, and 83–86 (DEVQ) contribute to the NADP(+) site. The active site involves His108. Residue Gly134 participates in NADP(+) binding. The region spanning 183-328 (TFREETETDL…KDLRAMFSWL (146 aa)) is the KARI C-terminal knotted domain. Mg(2+) is bound by residues Asp191, Glu195, Glu227, and Glu231. Ser252 contributes to the substrate binding site.

It belongs to the ketol-acid reductoisomerase family. The cofactor is Mg(2+).

The enzyme catalyses (2R)-2,3-dihydroxy-3-methylbutanoate + NADP(+) = (2S)-2-acetolactate + NADPH + H(+). It catalyses the reaction (2R,3R)-2,3-dihydroxy-3-methylpentanoate + NADP(+) = (S)-2-ethyl-2-hydroxy-3-oxobutanoate + NADPH + H(+). Its pathway is amino-acid biosynthesis; L-isoleucine biosynthesis; L-isoleucine from 2-oxobutanoate: step 2/4. It functions in the pathway amino-acid biosynthesis; L-valine biosynthesis; L-valine from pyruvate: step 2/4. Functionally, involved in the biosynthesis of branched-chain amino acids (BCAA). Catalyzes an alkyl-migration followed by a ketol-acid reduction of (S)-2-acetolactate (S2AL) to yield (R)-2,3-dihydroxy-isovalerate. In the isomerase reaction, S2AL is rearranged via a Mg-dependent methyl migration to produce 3-hydroxy-3-methyl-2-ketobutyrate (HMKB). In the reductase reaction, this 2-ketoacid undergoes a metal-dependent reduction by NADPH to yield (R)-2,3-dihydroxy-isovalerate. The protein is Ketol-acid reductoisomerase (NADP(+)) of Rippkaea orientalis (strain PCC 8801 / RF-1) (Cyanothece sp. (strain PCC 8801)).